A 147-amino-acid chain; its full sequence is Hemoglobin subunit epsilon (147 aa).

One can recognise a Globin domain in the interval 3-147 (HFTPEEKCII…VAIALAHKYH (145 aa)). Serine 51 is subject to Phosphoserine. Heme b is bound by residues histidine 64 and histidine 93.

It belongs to the globin family. As to expression, red blood cells.

Functionally, hemoglobin epsilon chain is a beta-type chain found in early embryos. This chain is Hemoglobin subunit epsilon (HBE1), found in Oryctolagus cuniculus (Rabbit).